The primary structure comprises 194 residues: Small ribosomal subunit protein uS4c (194 aa).

Positions 13–36 (GLTSKRPRSGSDPKNQLRSGKKSQ) are disordered. The region spanning 82 to 143 (MRLDNILFRL…KQRSKALIQN (62 aa)) is the S4 RNA-binding domain.

Belongs to the universal ribosomal protein uS4 family. Part of the 30S ribosomal subunit. Contacts protein S5. The interaction surface between S4 and S5 is involved in control of translational fidelity.

It is found in the plastid. The protein localises to the chloroplast. Functionally, one of the primary rRNA binding proteins, it binds directly to 16S rRNA where it nucleates assembly of the body of the 30S subunit. With S5 and S12 plays an important role in translational accuracy. This Moraea spathulata (Large yellow moraea) protein is Small ribosomal subunit protein uS4c (rps4).